A 213-amino-acid polypeptide reads, in one-letter code: ATP synthase peripheral stalk subunit OSCP, mitochondrial (213 aa).

A mitochondrion-targeting transit peptide spans 1 to 23 (MATPAVSGLSRQVRCFSTSVVRP). The short motif at 5-23 (AVSGLSRQVRCFSTSVVRP) is the SIFI-degron element. Residues K54, K60, K70, and K73 each carry the N6-acetyllysine modification. K90 carries the N6-succinyllysine modification. N6-acetyllysine; alternate is present on residues K158 and K162. N6-succinyllysine; alternate is present on residues K158 and K162. 3 positions are modified to N6-acetyllysine: K172, K176, and K192. K199 bears the N6-succinyllysine mark.

It belongs to the ATPase delta chain family. As to quaternary structure, component of the ATP synthase complex composed at least of ATP5F1A/subunit alpha, ATP5F1B/subunit beta, ATP5MC1/subunit c (homooctomer), MT-ATP6/subunit a, MT-ATP8/subunit 8, ATP5ME/subunit e, ATP5MF/subunit f, ATP5MG/subunit g, ATP5MK/subunit k, ATP5MJ/subunit j, ATP5F1C/subunit gamma, ATP5F1D/subunit delta, ATP5F1E/subunit epsilon, ATP5PF/subunit F6, ATP5PB/subunit b, ATP5PD/subunit d, ATP5PO/subunit OSCP. ATP synthase complex consists of a soluble F(1) head domain (subunits alpha(3) and beta(3)) - the catalytic core - and a membrane F(0) domain - the membrane proton channel (subunits c, a, 8, e, f, g, k and j). These two domains are linked by a central stalk (subunits gamma, delta, and epsilon) rotating inside the F1 region and a stationary peripheral stalk (subunits F6, b, d, and OSCP). In terms of processing, acetylation at Lys-162 decreases ATP production. Deacetylated by SIRT3. Post-translationally, in response to mitochondrial stress, the precursor protein is ubiquitinated by the SIFI complex in the cytoplasm before mitochondrial import, leading to its degradation. Within the SIFI complex, UBR4 initiates ubiquitin chain that are further elongated or branched by KCMF1.

The protein resides in the mitochondrion. Its subcellular location is the mitochondrion inner membrane. In terms of biological role, subunit OSCP, of the mitochondrial membrane ATP synthase complex (F(1)F(0) ATP synthase or Complex V) that produces ATP from ADP in the presence of a proton gradient across the membrane which is generated by electron transport complexes of the respiratory chain. ATP synthase complex consist of a soluble F(1) head domain - the catalytic core - and a membrane F(1) domain - the membrane proton channel. These two domains are linked by a central stalk rotating inside the F(1) region and a stationary peripheral stalk. During catalysis, ATP synthesis in the catalytic domain of F(1) is coupled via a rotary mechanism of the central stalk subunits to proton translocation. In vivo, can only synthesize ATP although its ATP hydrolase activity can be activated artificially in vitro. Part of the complex F(0) domain. Part of the complex F(0) domain and the peripheric stalk, which acts as a stator to hold the catalytic alpha(3)beta(3) subcomplex and subunit a/ATP6 static relative to the rotary elements. The sequence is that of ATP synthase peripheral stalk subunit OSCP, mitochondrial from Pongo abelii (Sumatran orangutan).